The sequence spans 135 residues: Ribosome-binding factor A (135 aa).

The protein belongs to the RbfA family. Monomer. Binds 30S ribosomal subunits, but not 50S ribosomal subunits or 70S ribosomes.

The protein localises to the cytoplasm. Its function is as follows. One of several proteins that assist in the late maturation steps of the functional core of the 30S ribosomal subunit. Associates with free 30S ribosomal subunits (but not with 30S subunits that are part of 70S ribosomes or polysomes). Required for efficient processing of 16S rRNA. May interact with the 5'-terminal helix region of 16S rRNA. The chain is Ribosome-binding factor A from Rhizobium meliloti (strain 1021) (Ensifer meliloti).